The chain runs to 68 residues: Palustrin-1c (68 aa).

Positions 1 to 22 (MFTMKKSLLLLFFLGTISLSLC) are cleaved as a signal peptide. Residues 23-39 (EEERGADEEEGDGEKLT) constitute a propeptide that is removed on maturation. Cys-62 and Cys-68 are joined by a disulfide.

Expressed by the skin glands.

Its subcellular location is the secreted. Its function is as follows. Antimicrobial peptide. The polypeptide is Palustrin-1c (Odorrana versabilis (Chinese bamboo leaf odorous frog)).